We begin with the raw amino-acid sequence, 98 residues long: Co-chaperonin GroES (98 aa).

This sequence belongs to the GroES chaperonin family. Heptamer of 7 subunits arranged in a ring. Interacts with the chaperonin GroEL.

The protein localises to the cytoplasm. In terms of biological role, together with the chaperonin GroEL, plays an essential role in assisting protein folding. The GroEL-GroES system forms a nano-cage that allows encapsulation of the non-native substrate proteins and provides a physical environment optimized to promote and accelerate protein folding. GroES binds to the apical surface of the GroEL ring, thereby capping the opening of the GroEL channel. This is Co-chaperonin GroES from Beutenbergia cavernae (strain ATCC BAA-8 / DSM 12333 / CCUG 43141 / JCM 11478 / NBRC 16432 / NCIMB 13614 / HKI 0122).